A 503-amino-acid chain; its full sequence is MMKELRFYNTLTRKKENFIPIDPTKVRLYVCGPTVYDYAHIGNARPLIVFDILFRLLRHVYGSDHVLYARNITDVDDKINARAACEYPNLPLNEAIRQLTERTYFQFQQDTIALGCLLPTSQPRATEHLEEMRALIERLLEKGHAYKAENHILFSISSIKNPPHYGAFANRSLDEMRAGARIDVAAYKREEMDFVLWKPSAEGEPGWKSPGGIPVLGRPGWHIECSAMSMAKLLAPYGGGLTCDDPIANIFDIHGGGLDLIFPHHENEIAQSCSAFGTERMANFWMHNGFLQVEGKKMSKSFGNFITIRSVLENNFLEFNGALAYEIKQNWAGLSARFSMLQTHYREPLNWTAQRLMQSSSELYRWYELLRDKKSMMENNEAIEDTLIDALSDDLNTPKAFTLLRKFYKAGDALALANGMNLLGLLRQEWIKEIDCPLFIKKTSLDSKFIEQCIAERLRLIHNKEWGAADKIRNELAAEGILLKDGKDPQSGKRITVWEIKRF.

C31 is a Zn(2+) binding site. Positions 33 to 43 (PTVYDYAHIGN) match the 'HIGH' region motif. Zn(2+) contacts are provided by C225, H264, and E268. The 'KMSKS' region motif lies at 297-301 (KMSKS). Residue K300 participates in ATP binding.

Belongs to the class-I aminoacyl-tRNA synthetase family. As to quaternary structure, monomer. Zn(2+) serves as cofactor.

The protein resides in the cytoplasm. It catalyses the reaction tRNA(Cys) + L-cysteine + ATP = L-cysteinyl-tRNA(Cys) + AMP + diphosphate. This chain is Cysteine--tRNA ligase, found in Bartonella tribocorum (strain CIP 105476 / IBS 506).